A 567-amino-acid polypeptide reads, in one-letter code: Zinc finger protein 143 (567 aa).

7 C2H2-type zinc fingers span residues 230–254 (FRCD…ERSH), 260–284 (YQCD…VRTH), 290–314 (YRCS…VRTH), 320–344 (FKCP…IRTH), 350–374 (YYCS…VRIH), 380–404 (YVCT…HVVH), and 410–433 (YNCN…RTAH). The span at 506-520 (SATESGPQHSHNLGG) shows a compositional bias: polar residues. The disordered stretch occupies residues 506 to 525 (SATESGPQHSHNLGGSESRP).

This sequence belongs to the GLI C2H2-type zinc-finger protein family.

Its subcellular location is the nucleus. Its function is as follows. Transcriptional activator. Activates the gene for selenocysteine tRNA (tRNAsec). Binds to the activator element (AE) motif of the selenocysteine tRNA gene promoter. The protein is Zinc finger protein 143 (znf143) of Xenopus tropicalis (Western clawed frog).